Reading from the N-terminus, the 832-residue chain is G-type lectin S-receptor-like serine/threonine-protein kinase RLK1 (832 aa).

A signal peptide spans 1–24 (MGSLSCSIIHLVLILQLQTFFVFS). The Extracellular segment spans residues 25–461 (QNIRNGSVPV…VPVTGNRAKK (437 aa)). N29, N92, N100, N178, N240, and N251 each carry an N-linked (GlcNAc...) asparagine glycan. The Bulb-type lectin domain occupies 37-157 (SLTASESQQI…GSEDSDEVLW (121 aa)). One can recognise an EGF-like; atypical domain in the interval 299–349 (RDNMCSPDDALGNMACGYNNICSLGNNKRPKCECPERFVLKDPSNEYGDCL). 3 disulfide bridges follow: C303-C320, C314-C330, and C332-C348. Residues 357 to 446 (CRPENQTANS…DSDTFIKVRN (90 aa)) form the PAN domain. A glycan (N-linked (GlcNAc...) asparagine) is linked at N361. Disulfide bonds link C397/C420 and C401/C407. N-linked (GlcNAc...) asparagine glycosylation occurs at N446. A helical membrane pass occupies residues 462-482 (LDWLIIACSVLLGTSAFVIFD). Residues 483 to 832 (TSCSYRKTKK…SLSSDPVSLV (350 aa)) lie on the Cytoplasmic side of the membrane. The 273-residue stretch at 531–803 (RDFTEELGRG…NVTQMLEGVI (273 aa)) folds into the Protein kinase domain. Residues 537-545 (LGRGAFGIV) and K563 contribute to the ATP site. The segment at 622 to 638 (RRPRPSWEDRKNIAVAI) is caM-binding. The active-site Proton acceptor is D657.

Belongs to the protein kinase superfamily. Ser/Thr protein kinase family.

The protein resides in the cell membrane. The catalysed reaction is L-seryl-[protein] + ATP = O-phospho-L-seryl-[protein] + ADP + H(+). It catalyses the reaction L-threonyl-[protein] + ATP = O-phospho-L-threonyl-[protein] + ADP + H(+). The polypeptide is G-type lectin S-receptor-like serine/threonine-protein kinase RLK1 (RLK1) (Arabidopsis thaliana (Mouse-ear cress)).